A 542-amino-acid polypeptide reads, in one-letter code: CTP synthase (542 aa).

The segment at 1–265 (MTKYIFVTGG…LKPISKELSL (265 aa)) is amidoligase domain. CTP is bound at residue Ser13. Ser13 lines the UTP pocket. ATP is bound by residues 14–19 (SLGKGI) and Asp71. Residues Asp71 and Glu139 each coordinate Mg(2+). Residues 146 to 148 (DIE), 186 to 191 (KSKPTQ), and Lys222 contribute to the CTP site. UTP contacts are provided by residues 186 to 191 (KSKPTQ) and Lys222. One can recognise a Glutamine amidotransferase type-1 domain in the interval 290–541 (VLGFVGKYLE…VEATLAISQE (252 aa)). Residue Gly352 participates in L-glutamine binding. Catalysis depends on Cys379, which acts as the Nucleophile; for glutamine hydrolysis. L-glutamine is bound by residues 380-383 (LGMQ), Glu403, and Arg471. Residues His514 and Glu516 contribute to the active site.

It belongs to the CTP synthase family. As to quaternary structure, homotetramer.

It carries out the reaction UTP + L-glutamine + ATP + H2O = CTP + L-glutamate + ADP + phosphate + 2 H(+). It catalyses the reaction L-glutamine + H2O = L-glutamate + NH4(+). The enzyme catalyses UTP + NH4(+) + ATP = CTP + ADP + phosphate + 2 H(+). It functions in the pathway pyrimidine metabolism; CTP biosynthesis via de novo pathway; CTP from UDP: step 2/2. With respect to regulation, allosterically activated by GTP, when glutamine is the substrate; GTP has no effect on the reaction when ammonia is the substrate. The allosteric effector GTP functions by stabilizing the protein conformation that binds the tetrahedral intermediate(s) formed during glutamine hydrolysis. Inhibited by the product CTP, via allosteric rather than competitive inhibition. Functionally, catalyzes the ATP-dependent amination of UTP to CTP with either L-glutamine or ammonia as the source of nitrogen. Regulates intracellular CTP levels through interactions with the four ribonucleotide triphosphates. The polypeptide is CTP synthase (Sulfurimonas denitrificans (strain ATCC 33889 / DSM 1251) (Thiomicrospira denitrificans (strain ATCC 33889 / DSM 1251))).